A 211-amino-acid chain; its full sequence is Large ribosomal subunit protein mL48 (211 aa).

The transit peptide at 1–27 (MSGTLGKVLGVWTNTVSKQGFSLLRFR) directs the protein to the mitochondrion. An N6-succinyllysine modification is found at Lys198.

This sequence belongs to the mitochondrion-specific ribosomal protein mL48 family. Component of the mitochondrial ribosome large subunit (39S) which comprises a 16S rRNA and about 50 distinct proteins. Interacts with OXA1L.

The protein localises to the mitochondrion. This chain is Large ribosomal subunit protein mL48 (Mrpl48), found in Mus musculus (Mouse).